Consider the following 257-residue polypeptide: Cytochrome b561 domain-containing protein At2g30890 (257 aa).

The signal sequence occupies residues 1 to 21 (MEIHHQLLVSLLFLLLPLCSS). Residues 22–219 (QENTRSLAID…LFQDKWSYIQ (198 aa)) form the Cytochrome b561 domain. The next 5 membrane-spanning stretches (helical) occupy residues 55 to 75 (VHGFMLWAAMGVLMPIGIISI), 91 to 111 (LFFLHVTSQMVAVILVTIGAV), 125 to 145 (HQQLGIGLYVIVWFQALLGFL), 157 to 177 (WFVGHWILGTSIAILGIINIY), and 191 to 211 (ANLWTILFTAQLSCIALVYLF). Residues His-56, His-95, His-125, and His-161 each coordinate heme b. The tract at residues 235-257 (NISTAETGHGYEVEESKPELEKC) is disordered. Over residues 243-257 (HGYEVEESKPELEKC) the composition is skewed to basic and acidic residues.

It depends on heme b as a cofactor.

Its subcellular location is the membrane. This chain is Cytochrome b561 domain-containing protein At2g30890, found in Arabidopsis thaliana (Mouse-ear cress).